A 320-amino-acid chain; its full sequence is Heterogeneous nuclear ribonucleoprotein A1 (320 aa).

At Met1 the chain carries N-acetylmethionine. Ser2 bears the N-acetylserine; in Heterogeneous nuclear ribonucleoprotein A1, N-terminally processed mark. A Phosphoserine modification is found at Ser2. At Lys3 the chain carries N6-acetyllysine; alternate. Lys3 participates in a covalent cross-link: Glycyl lysine isopeptide (Lys-Gly) (interchain with G-Cter in SUMO2); alternate. Phosphoserine occurs at positions 4 and 6. Residues 4 to 94 (SESPKEPEQL…EPKRAVSRED (91 aa)) form a globular A domain region. Lys8 participates in a covalent cross-link: Glycyl lysine isopeptide (Lys-Gly) (interchain with G-Cter in SUMO2). RRM domains lie at 14 to 97 (RKLF…DSQR) and 105 to 184 (KKIF…LSKQ). At Ser22 the chain carries Phosphoserine. Lys78 is covalently cross-linked (Glycyl lysine isopeptide (Lys-Gly) (interchain with G-Cter in SUMO2)). Positions 95–185 (SQRPGAHLTV…EVRKALSKQE (91 aa)) are globular B domain. Residue Lys113 forms a Glycyl lysine isopeptide (Lys-Gly) (interchain with G-Cter in SUMO) linkage. Glycyl lysine isopeptide (Lys-Gly) (interchain with G-Cter in SUMO2) cross-links involve residues Lys179 and Lys183. Residues 182-216 (SKQEMASASSSQRGRSGSGNFGGGRGGGFGGNDNF) are disordered. Ser192 carries the phosphoserine; by MKNK2 modification. Arg194 carries the asymmetric dimethylarginine; alternate modification. Arg194 carries the post-translational modification Dimethylated arginine; alternate. Arg194 bears the Omega-N-methylarginine; alternate mark. A compositionally biased stretch (gly residues) spans 197–216 (SGSGNFGGGRGGGFGGNDNF). Residue Ser199 is modified to Phosphoserine. Arg206, Arg218, Arg225, and Arg232 each carry asymmetric dimethylarginine; alternate. Position 206 is a dimethylated arginine; alternate (Arg206). Arg206, Arg218, Arg225, and Arg232 each carry omega-N-methylarginine; alternate. Positions 218–240 (RGGNFSGRGGFGGSRGGGGYGGS) are RNA-binding RGG-box. Arg225 carries the post-translational modification Dimethylated arginine; alternate. The interval 268–305 (NQSSNFGPMKGGNFGGRSLGPYGGGGQYFAKPRNQGGY) is nuclear targeting sequence. Over residues 277–294 (KGGNFGGRSLGPYGGGGQ) the composition is skewed to gly residues. The disordered stretch occupies residues 277 to 320 (KGGNFGGRSLGPYGGGGQYFAKPRNQGGYGGSSSSSSYGSGRRF). Omega-N-methylarginine is present on Arg284. A Phosphoserine modification is found at Ser285. At Lys298 the chain carries N6-acetyllysine; alternate. Residue Lys298 forms a Glycyl lysine isopeptide (Lys-Gly) (interchain with G-Cter in SUMO2); alternate linkage. Arg300 bears the Omega-N-methylarginine mark. The segment covering 308-320 (SSSSSSYGSGRRF) has biased composition (low complexity). Ser309 is subject to Phosphoserine. Residues Ser310, Ser311, and Ser312 each carry the phosphoserine; by MKNK2 modification. Phosphoserine is present on residues Ser313 and Ser316. Position 318 is an omega-N-methylarginine (Arg318).

In terms of assembly, identified in the spliceosome C complex. Identified in a IGF2BP1-dependent mRNP granule complex containing untranslated mRNAs. Interacts with SEPT6, C9orf72, KHDRBS1, UBQLN2. Interacts with PPIA/CYPA. Sumoylated.

The protein resides in the nucleus. It is found in the cytoplasm. Its function is as follows. Involved in the packaging of pre-mRNA into hnRNP particles, transport of poly(A) mRNA from the nucleus to the cytoplasm and modulation of splice site selection. Plays a role in the splicing of pyruvate kinase PKM by binding repressively to sequences flanking PKM exon 9, inhibiting exon 9 inclusion and resulting in exon 10 inclusion and production of the PKM M2 isoform. Binds to the IRES and thereby inhibits the translation of the apoptosis protease activating factor APAF1. May bind to specific miRNA hairpins. The polypeptide is Heterogeneous nuclear ribonucleoprotein A1 (HNRNPA1) (Macaca mulatta (Rhesus macaque)).